A 335-amino-acid chain; its full sequence is Adenine deaminase (335 aa).

Zn(2+)-binding residues include His-17, His-19, and His-197. The active-site Proton donor is Glu-200. Residue Asp-278 participates in Zn(2+) binding. Asp-279 contacts substrate.

It belongs to the metallo-dependent hydrolases superfamily. Adenosine and AMP deaminases family. Adenine deaminase type 2 subfamily. Zn(2+) is required as a cofactor.

The catalysed reaction is adenine + H2O + H(+) = hypoxanthine + NH4(+). Its function is as follows. Catalyzes the hydrolytic deamination of adenine to hypoxanthine. Plays an important role in the purine salvage pathway and in nitrogen catabolism. The chain is Adenine deaminase from Marinomonas sp. (strain MWYL1).